The following is a 172-amino-acid chain: ATP synthase subunit b (172 aa).

A helical membrane pass occupies residues 17–37; it reads IVFSAIVLAIVLPFFWWFVIP.

The protein belongs to the ATPase B chain family. F-type ATPases have 2 components, F(1) - the catalytic core - and F(0) - the membrane proton channel. F(1) has five subunits: alpha(3), beta(3), gamma(1), delta(1), epsilon(1). F(0) has three main subunits: a(1), b(2) and c(10-14). The alpha and beta chains form an alternating ring which encloses part of the gamma chain. F(1) is attached to F(0) by a central stalk formed by the gamma and epsilon chains, while a peripheral stalk is formed by the delta and b chains.

It is found in the cell membrane. In terms of biological role, f(1)F(0) ATP synthase produces ATP from ADP in the presence of a proton or sodium gradient. F-type ATPases consist of two structural domains, F(1) containing the extramembraneous catalytic core and F(0) containing the membrane proton channel, linked together by a central stalk and a peripheral stalk. During catalysis, ATP synthesis in the catalytic domain of F(1) is coupled via a rotary mechanism of the central stalk subunits to proton translocation. Its function is as follows. Component of the F(0) channel, it forms part of the peripheral stalk, linking F(1) to F(0). This Tropheryma whipplei (strain TW08/27) (Whipple's bacillus) protein is ATP synthase subunit b.